The chain runs to 277 residues: 4-hydroxy-3-methylbut-2-enyl diphosphate reductase (277 aa).

Cys12 is a [4Fe-4S] cluster binding site. Residues His36 and His70 each contribute to the (2E)-4-hydroxy-3-methylbut-2-enyl diphosphate site. The dimethylallyl diphosphate site is built by His36 and His70. Residues His36 and His70 each contribute to the isopentenyl diphosphate site. [4Fe-4S] cluster is bound at residue Cys92. Residue His120 coordinates (2E)-4-hydroxy-3-methylbut-2-enyl diphosphate. A dimethylallyl diphosphate-binding site is contributed by His120. His120 serves as a coordination point for isopentenyl diphosphate. Glu122 serves as the catalytic Proton donor. Position 158 (Thr158) interacts with (2E)-4-hydroxy-3-methylbut-2-enyl diphosphate. Cys186 lines the [4Fe-4S] cluster pocket. Residues Ser214, Asn216, and Ser258 each contribute to the (2E)-4-hydroxy-3-methylbut-2-enyl diphosphate site. Residues Ser214, Asn216, and Ser258 each contribute to the dimethylallyl diphosphate site. Isopentenyl diphosphate is bound by residues Ser214, Asn216, and Ser258.

It belongs to the IspH family. Requires [4Fe-4S] cluster as cofactor.

The enzyme catalyses isopentenyl diphosphate + 2 oxidized [2Fe-2S]-[ferredoxin] + H2O = (2E)-4-hydroxy-3-methylbut-2-enyl diphosphate + 2 reduced [2Fe-2S]-[ferredoxin] + 2 H(+). It catalyses the reaction dimethylallyl diphosphate + 2 oxidized [2Fe-2S]-[ferredoxin] + H2O = (2E)-4-hydroxy-3-methylbut-2-enyl diphosphate + 2 reduced [2Fe-2S]-[ferredoxin] + 2 H(+). The protein operates within isoprenoid biosynthesis; dimethylallyl diphosphate biosynthesis; dimethylallyl diphosphate from (2E)-4-hydroxy-3-methylbutenyl diphosphate: step 1/1. Its pathway is isoprenoid biosynthesis; isopentenyl diphosphate biosynthesis via DXP pathway; isopentenyl diphosphate from 1-deoxy-D-xylulose 5-phosphate: step 6/6. Its function is as follows. Catalyzes the conversion of 1-hydroxy-2-methyl-2-(E)-butenyl 4-diphosphate (HMBPP) into a mixture of isopentenyl diphosphate (IPP) and dimethylallyl diphosphate (DMAPP). Acts in the terminal step of the DOXP/MEP pathway for isoprenoid precursor biosynthesis. This is 4-hydroxy-3-methylbut-2-enyl diphosphate reductase from Campylobacter jejuni subsp. jejuni serotype O:2 (strain ATCC 700819 / NCTC 11168).